The chain runs to 209 residues: Pyridoxine/pyridoxamine 5'-phosphate oxidase (209 aa).

Substrate-binding positions include 5 to 8 (REEY) and Lys-63. FMN contacts are provided by residues 58–63 (RVVLLK), 73–74 (FT), Arg-79, Lys-80, and Gln-102. Positions 120, 124, and 128 each coordinate substrate. FMN contacts are provided by residues 137 to 138 (QS) and Trp-181. Position 187–189 (187–189 (RLH)) interacts with substrate. An FMN-binding site is contributed by Arg-191.

Belongs to the pyridoxamine 5'-phosphate oxidase family. Homodimer. The cofactor is FMN.

The enzyme catalyses pyridoxamine 5'-phosphate + O2 + H2O = pyridoxal 5'-phosphate + H2O2 + NH4(+). The catalysed reaction is pyridoxine 5'-phosphate + O2 = pyridoxal 5'-phosphate + H2O2. Its pathway is cofactor metabolism; pyridoxal 5'-phosphate salvage; pyridoxal 5'-phosphate from pyridoxamine 5'-phosphate: step 1/1. It functions in the pathway cofactor metabolism; pyridoxal 5'-phosphate salvage; pyridoxal 5'-phosphate from pyridoxine 5'-phosphate: step 1/1. In terms of biological role, catalyzes the oxidation of either pyridoxine 5'-phosphate (PNP) or pyridoxamine 5'-phosphate (PMP) into pyridoxal 5'-phosphate (PLP). The chain is Pyridoxine/pyridoxamine 5'-phosphate oxidase from Alcanivorax borkumensis (strain ATCC 700651 / DSM 11573 / NCIMB 13689 / SK2).